The sequence spans 335 residues: Methionine import ATP-binding protein MetN (335 aa).

The 240-residue stretch at 2 to 241 (IQFQRLHKSY…PKHATTRRFV (240 aa)) folds into the ABC transporter domain. 38–45 (GHSGAGKS) serves as a coordination point for ATP.

It belongs to the ABC transporter superfamily. Methionine importer (TC 3.A.1.24) family. The complex is composed of two ATP-binding proteins (MetN), two transmembrane proteins (MetI) and a solute-binding protein (MetQ).

The protein localises to the cell inner membrane. The catalysed reaction is L-methionine(out) + ATP + H2O = L-methionine(in) + ADP + phosphate + H(+). It carries out the reaction D-methionine(out) + ATP + H2O = D-methionine(in) + ADP + phosphate + H(+). Its function is as follows. Part of the ABC transporter complex MetNIQ involved in methionine import. Responsible for energy coupling to the transport system. The protein is Methionine import ATP-binding protein MetN of Xanthomonas axonopodis pv. citri (strain 306).